Here is a 1161-residue protein sequence, read N- to C-terminus: Immunoglobulin superfamily member 3 (1161 aa).

Positions 1 to 16 (MGTAALLILLAGVSWA) are cleaved as a signal peptide. Over 17 to 1091 (QREVAIQPGP…LQSTICANDA (1075 aa)) the chain is Extracellular. Ig-like C2-type domains are found at residues 18-135 (REVA…AKVN), 140-258 (PDTL…WFPL), 272-382 (PTDK…RGPS), 402-523 (PLRT…WQLL), 541-651 (FAVT…RETS), 674-796 (PRLQ…EETS), 806-930 (PDAN…WYRR), and 947-1063 (PQLQ…WYLL). 2 disulfides stabilise this stretch: Cys39–Cys117 and Cys164–Cys242. Positions 246–248 (EWI) match the EWI motif motif. 6 disulfides stabilise this stretch: Cys298–Cys372, Cys428–Cys507, Cys562–Cys641, Cys697–Cys775, Cys831–Cys914, and Cys970–Cys1047. A helical transmembrane segment spans residues 1092-1112 (LFYLVFFYPFPIFGILIITIL). The Cytoplasmic segment spans residues 1113–1161 (LVRFRHRPTGKPGEGKNGVPLLWIKEPHLNYSPTCLEPPVLSIHPGTID).

The protein localises to the membrane. This is Immunoglobulin superfamily member 3 (igsf3) from Xenopus tropicalis (Western clawed frog).